A 225-amino-acid polypeptide reads, in one-letter code: Protein-L-isoaspartate O-methyltransferase (225 aa).

The active site involves S75.

Belongs to the methyltransferase superfamily. L-isoaspartyl/D-aspartyl protein methyltransferase family.

The protein localises to the cytoplasm. It carries out the reaction [protein]-L-isoaspartate + S-adenosyl-L-methionine = [protein]-L-isoaspartate alpha-methyl ester + S-adenosyl-L-homocysteine. Its function is as follows. Catalyzes the methyl esterification of L-isoaspartyl residues in peptides and proteins that result from spontaneous decomposition of normal L-aspartyl and L-asparaginyl residues. It plays a role in the repair and/or degradation of damaged proteins. This chain is Protein-L-isoaspartate O-methyltransferase, found in Xylella fastidiosa (strain M23).